Here is a 413-residue protein sequence, read N- to C-terminus: Eukaryotic initiation factor 4A-9 (413 aa).

The short motif at 40–68 is the Q motif element; that stretch reads HSFDAMGLKENLLRGIYAYGFEKPSAIQQ. The Helicase ATP-binding domain occupies 71–241; that stretch reads IVPFCKGLDV…RKFMNKPVRI (171 aa). Position 84-91 (84-91) interacts with ATP; sequence AQSGTGKT. The DEAD box signature appears at 189 to 192; that stretch reads DEAD. Residues 252–413 enclose the Helicase C-terminal domain; sequence GIKQFYVNVD…ELPANVADLL (162 aa).

This sequence belongs to the DEAD box helicase family. eIF4A subfamily. EIF4F is a multi-subunit complex, the composition of which varies with external and internal environmental conditions. It is composed of at least EIF4A, EIF4E and EIF4G.

It carries out the reaction ATP + H2O = ADP + phosphate + H(+). Its function is as follows. ATP-dependent RNA helicase which is a subunit of the eIF4F complex involved in cap recognition and is required for mRNA binding to ribosome. In the current model of translation initiation, eIF4A unwinds RNA secondary structures in the 5'-UTR of mRNAs which is necessary to allow efficient binding of the small ribosomal subunit, and subsequent scanning for the initiator codon. The protein is Eukaryotic initiation factor 4A-9 of Nicotiana tabacum (Common tobacco).